We begin with the raw amino-acid sequence, 221 residues long: Enolase-phosphatase E1 (221 aa).

Belongs to the HAD-like hydrolase superfamily. MasA/MtnC family. As to quaternary structure, monomer. Mg(2+) is required as a cofactor.

The catalysed reaction is 5-methylsulfanyl-2,3-dioxopentyl phosphate + H2O = 1,2-dihydroxy-5-(methylsulfanyl)pent-1-en-3-one + phosphate. The protein operates within amino-acid biosynthesis; L-methionine biosynthesis via salvage pathway; L-methionine from S-methyl-5-thio-alpha-D-ribose 1-phosphate: step 3/6. It functions in the pathway amino-acid biosynthesis; L-methionine biosynthesis via salvage pathway; L-methionine from S-methyl-5-thio-alpha-D-ribose 1-phosphate: step 4/6. Its function is as follows. Bifunctional enzyme that catalyzes the enolization of 2,3-diketo-5-methylthiopentyl-1-phosphate (DK-MTP-1-P) into the intermediate 2-hydroxy-3-keto-5-methylthiopentenyl-1-phosphate (HK-MTPenyl-1-P), which is then dephosphorylated to form the acireductone 1,2-dihydroxy-3-keto-5-methylthiopentene (DHK-MTPene). The chain is Enolase-phosphatase E1 from Hydrogenobaculum sp. (strain Y04AAS1).